Consider the following 222-residue polypeptide: MAIIMAESSYERRVKALYEKQIRMEALEAKFIKKVYKFNSNLLDVKEAACRHQRKVGKLQKVLMERREELDKRVSFIEELDRELEATKLRDLAMKDRIKQQKMLARQRKNEIMESIHTLSKTTGTYINQDALPARVKGVTVLRGDKRNQLIPFDLKSTDVEGLDSLCQHLESLNVDMAQWQQLISLAMDVAMESRAPTTPPKEATNCNSIIEIDLTSPTCHI.

Residues 51-86 (RHQRKVGKLQKVLMERREELDKRVSFIEELDRELEA) adopt a coiled-coil conformation.

The protein belongs to the SPC25 family. Component of the Ndc80 complex, which is composed of Ndc80, Nuf2 and Spc25.

The protein localises to the nucleus. The protein resides in the chromosome. It localises to the centromere. Its subcellular location is the kinetochore. Acts as a component of the essential kinetochore-associated Ndc80 complex, which is required for chromosome segregation and spindle checkpoint activity during meiosis and mitosis. Required for kinetochore integrity and the organization of stable microtubule binding sites in the outer plate of the kinetochore. Participates in SAC signaling that responds specifically to disruptions in spindle microtubule dynamics. The NDC80 complex synergistically enhances the affinity of the SKA1 complex for microtubules and may allow the NDC80 complex to track depolymerizing microtubules. The chain is Kinetochore protein Spc25 from Drosophila mauritiana (Fruit fly).